The following is a 454-amino-acid chain: uncharacterized protein (454 aa).

An N-terminal signal peptide occupies residues 1-21; sequence MKYKTVKSIPLFLLGSIVFTA. A lipid anchor (N-palmitoyl cysteine) is attached at cysteine 22. Cysteine 22 carries S-diacylglycerol cysteine lipidation. Low complexity predominate over residues 55 to 64; sequence ASSSSSTTTS. The segment at 55-87 is disordered; the sequence is ASSSSSTTTSNDDNNQKGYFLETNRSTGTYDPN. The span at 65 to 87 shows a compositional bias: polar residues; sequence NDDNNQKGYFLETNRSTGTYDPN.

It is found in the cell membrane. This is an uncharacterized protein from Mycoplasma pneumoniae (strain ATCC 29342 / M129 / Subtype 1) (Mycoplasmoides pneumoniae).